A 349-amino-acid chain; its full sequence is Cobalt-precorrin-5B C(1)-methyltransferase (349 aa).

It belongs to the CbiD family.

It carries out the reaction Co-precorrin-5B + S-adenosyl-L-methionine = Co-precorrin-6A + S-adenosyl-L-homocysteine. Its pathway is cofactor biosynthesis; adenosylcobalamin biosynthesis; cob(II)yrinate a,c-diamide from sirohydrochlorin (anaerobic route): step 6/10. In terms of biological role, catalyzes the methylation of C-1 in cobalt-precorrin-5B to form cobalt-precorrin-6A. This Saccharolobus solfataricus (strain ATCC 35092 / DSM 1617 / JCM 11322 / P2) (Sulfolobus solfataricus) protein is Cobalt-precorrin-5B C(1)-methyltransferase.